Consider the following 363-residue polypeptide: tRNA N6-adenosine threonylcarbamoyltransferase (363 aa).

The Fe cation site is built by H121 and H125. Residues 143-147 (LASGG), D176, G189, and N287 each bind substrate. Residue D315 participates in Fe cation binding.

Belongs to the KAE1 / TsaD family. Fe(2+) serves as cofactor.

Its subcellular location is the cytoplasm. It catalyses the reaction L-threonylcarbamoyladenylate + adenosine(37) in tRNA = N(6)-L-threonylcarbamoyladenosine(37) in tRNA + AMP + H(+). Its function is as follows. Required for the formation of a threonylcarbamoyl group on adenosine at position 37 (t(6)A37) in tRNAs that read codons beginning with adenine. Is involved in the transfer of the threonylcarbamoyl moiety of threonylcarbamoyl-AMP (TC-AMP) to the N6 group of A37, together with TsaE and TsaB. TsaD likely plays a direct catalytic role in this reaction. In Rhodopseudomonas palustris (strain HaA2), this protein is tRNA N6-adenosine threonylcarbamoyltransferase.